We begin with the raw amino-acid sequence, 376 residues long: Alkanesulfonate monooxygenase (376 aa).

Belongs to the SsuD family.

The enzyme catalyses an alkanesulfonate + FMNH2 + O2 = an aldehyde + FMN + sulfite + H2O + 2 H(+). Functionally, catalyzes the desulfonation of aliphatic sulfonates. This chain is Alkanesulfonate monooxygenase, found in Bacillus licheniformis (strain ATCC 14580 / DSM 13 / JCM 2505 / CCUG 7422 / NBRC 12200 / NCIMB 9375 / NCTC 10341 / NRRL NRS-1264 / Gibson 46).